Consider the following 182-residue polypeptide: Ribosome-recycling factor (182 aa).

It belongs to the RRF family.

The protein resides in the cytoplasm. In terms of biological role, responsible for the release of ribosomes from messenger RNA at the termination of protein biosynthesis. May increase the efficiency of translation by recycling ribosomes from one round of translation to another. This Cyanothece sp. (strain PCC 7425 / ATCC 29141) protein is Ribosome-recycling factor.